Consider the following 851-residue polypeptide: DNA mismatch repair protein MutS (851 aa).

602-609 is a binding site for ATP; the sequence is GPNMSGKS.

This sequence belongs to the DNA mismatch repair MutS family.

Functionally, this protein is involved in the repair of mismatches in DNA. It is possible that it carries out the mismatch recognition step. This protein has a weak ATPase activity. The protein is DNA mismatch repair protein MutS of Streptococcus equi subsp. equi (strain 4047).